Here is a 620-residue protein sequence, read N- to C-terminus: MSSGVQGGPAANANAYQTHPLRDAASALGTLSPQAYVDVVSAAQRNFLERMSQLASEQCDAQPAAHDARLDDKPALRAPQERDAPPLGASDTGSRASGAAKLTELLGVLMSVISASSLDELKQRSDIWNQMSKAAQDNLSRLSDAFHRATDEAKAAADAAEQAAAAAKQAGADAKAADAAVDAAQKRYDDAVKQGLPDDRLQSLKAALEQARQQAGDAHGRADALQADATKKLDAASALATQARACEQQVDDAVNQATQQYGASASLRTPQSPRLSGAAELTAVLGKLQELISSGNVKELESKQKLFTEMQAKREAELQKKSDEYQAQVKKAEEMQKTMGCIGKIVGWVITAVSFAAAAFTGGASLALAAVGLALAVGDEISRATTGVSFMDKLMQPVMDAILKPLMEMISSLITKALVACGVDQQKAELAGAILGAVVTGVALVAAAFVGASAVKAVASKVIDAMAGQLTKLMDSAIGKMLVQLIEKFSEKSGLQALGSRTATAMTRMRRAIGVEAKEDGMLLANRFEKAGTVMNVGNQVSQAAGGIVVGVERAKAMGLLADVKEAMYDIKLLGDLLKQAVDAFAEHNRVLAQLMQQMSDAGEMQTSTGKLILRNARAV.

The tract at residues 58 to 95 is disordered; it reads QCDAQPAAHDARLDDKPALRAPQERDAPPLGASDTGSR. Positions 66-84 are enriched in basic and acidic residues; sequence HDARLDDKPALRAPQERDA. Positions 309 to 339 form a coiled coil; the sequence is EMQAKREAELQKKSDEYQAQVKKAEEMQKTM. A run of 3 helical transmembrane segments spans residues 355–375, 401–421, and 430–450; these read FAAAAFTGGASLALAAVGLAL, AILKPLMEMISSLITKALVAC, and LAGAILGAVVTGVALVAAAFV.

The protein belongs to the SctE/SipB/YopB family.

It is found in the secreted. The protein localises to the host membrane. Plays a role in the bacterium-induced formation of multinucleated giant cell (MNGC), which is formed after host cell fusion, as well as in the intercellular spreading of bacteria and in the induction of apoptosis in macrophages. May act in concert with other effector proteins to induce fusion of host cell membranes. The sequence is that of Translocator protein BipB (bipB) from Burkholderia pseudomallei (strain 1106a).